We begin with the raw amino-acid sequence, 209 residues long: Peroxiredoxin (209 aa).

Positions 2 to 156 constitute a Thioredoxin domain; it reads PLIGDKFPEM…IVRMIRAFRV (155 aa). The Cysteine sulfenic acid (-SOH) intermediate role is filled by Cys44. Residue Arg119 participates in substrate binding. A disulfide bridge connects residues Cys198 and Cys204.

It belongs to the peroxiredoxin family. Prx6 subfamily. In terms of assembly, homodecamer. Pentamer of dimers that assemble into a ring structure.

Its subcellular location is the cytoplasm. The enzyme catalyses a hydroperoxide + [thioredoxin]-dithiol = an alcohol + [thioredoxin]-disulfide + H2O. Thiol-specific peroxidase that catalyzes the reduction of hydrogen peroxide and organic hydroperoxides to water and alcohols, respectively. Plays a role in cell protection against oxidative stress by detoxifying peroxides. This is Peroxiredoxin from Methanothermobacter thermautotrophicus (strain ATCC 29096 / DSM 1053 / JCM 10044 / NBRC 100330 / Delta H) (Methanobacterium thermoautotrophicum).